A 315-amino-acid chain; its full sequence is 2-oxoglutarate and iron-dependent oxygenase domain-containing protein 3 (315 aa).

The tract at residues 1–31 (MAPQRRGPPRIPEGSSAAERRRATSTKKDRL) is disordered. At 1 to 41 (MAPQRRGPPRIPEGSSAAERRRATSTKKDRLPREAQRTWLR) the chain is on the cytoplasmic side. Basic and acidic residues predominate over residues 18–31 (AERRRATSTKKDRL). A helical; Signal-anchor for type II membrane protein transmembrane segment spans residues 42–62 (IVAFGVGLALVTCLLWSSVGI). The Lumenal segment spans residues 63–315 (DDDVAEVVAR…DHGIEDPVLT (253 aa)). The Fe2OG dioxygenase domain occupies 203–305 (KPTFFSRINS…AITIAFTCNP (103 aa)). N-linked (GlcNAc...) asparagine glycosylation occurs at N211. Residues H226 and D228 each coordinate Fe cation. Residue N263 is glycosylated (N-linked (GlcNAc...) asparagine). Fe cation is bound at residue H284. Residue R294 is part of the active site. R294 provides a ligand contact to 2-oxoglutarate.

It belongs to the OGFOD3 family. The cofactor is Fe(2+). L-ascorbate is required as a cofactor.

It localises to the membrane. The protein is 2-oxoglutarate and iron-dependent oxygenase domain-containing protein 3 (Ogfod3) of Mus musculus (Mouse).